The primary structure comprises 296 residues: Myeloid differentiation primary response protein MyD88 (296 aa).

In terms of domain architecture, Death spans 54-109; sequence MGFEYLEIRELETRPDPTRSLLDAWQGRSGASVGRLLELLALLDREDILKELKSRI. An intermediate domain region spans residues 110 to 155; sequence EEDCQKYLGKQQNQESEKPLQVARVESSVPQTKELGGITTLDDPLG. Positions 159–293 constitute a TIR domain; that stretch reads ELFDAFICYC…WFWTRLAKAL (135 aa). Ser244 carries the post-translational modification Phosphoserine.

Homodimer. Also forms heterodimers with TIRAP. Binds to TLR2, TLR4, IRAK1, IRAK2 and IRAK4 via their respective TIR domains. Interacts with IL18R1. Interacts with BMX, IL1RL1, IKBKE and IRF7. Interacts with LRRFIP1 and LRRFIP2; this interaction positively regulates Toll-like receptor (TLR) signaling in response to agonist. Interacts with FLII. LRRFIP1 and LRRFIP2 compete with FLII for MYD88-binding. Interacts with IRF1. Upon IL1B treatment, forms a complex with PELI1, IRAK1, IRAK4 and TRAF6; this complex recruits MAP3K7/TAK1, TAB1 and TAB2 to mediate NF-kappa-B activation. Direct binding of SMAD6 to PELI1 prevents the complex formation and hence negatively regulates IL1R-TLR signaling and eventually NF-kappa-B-mediated gene expression. May interact with PIK3AP1. Interacts (via TIR domain) with DHX9 (via H2A and OB-fold regions); this interaction is direct. Interacts with OTUD4 deubiquitinase; the interaction is direct. Post-translationally, ubiquitinated; undergoes 'Lys-63'-linked polyubiquitination. OTUD4 specifically hydrolyzes 'Lys-63'-linked polyubiquitinated MYD88. Deubiquitinated by USP3 that cleaves 'Lys-63'-linked ubiquitin chains leading to inhibition of MYD88-induced NF-kappa-B signaling. Detected in bone marrow. Isoform 1 is expressed in testis, kidney, lung, ovary, adrenal gland, provstate, thymus and heart, and weakly in skeletal muscle, liver, spleen and brain. Isoform 2 is mainly expressed in the spleen and weakly in brain.

It is found in the cytoplasm. The protein localises to the nucleus. In terms of biological role, adapter protein involved in the Toll-like receptor and IL-1 receptor signaling pathway in the innate immune response. Acts via IRAK1, IRAK2, IRF7 and TRAF6, leading to NF-kappa-B activation, cytokine secretion and the inflammatory response. Increases IL-8 transcription. Involved in IL-18-mediated signaling pathway. Activates IRF1 resulting in its rapid migration into the nucleus to mediate an efficient induction of IFN-beta, NOS2/INOS, and IL12A genes. Upon TLR8 activation by GU-rich single-stranded RNA (GU-rich RNA) derived from viruses, induces IL1B release through NLRP3 inflammasome activation. MyD88-mediated signaling in intestinal epithelial cells is crucial for maintenance of gut homeostasis and controls the expression of the antimicrobial lectin REG3G in the small intestine. Mediates leukocyte recruitment at the inflammatory site. Defective in its ability to induce IRAK phosphorylation and NF-kappa-B activation and can function as a negative regulator of activation by IL-1 or lipopolysaccharide (LPS). In Mus musculus (Mouse), this protein is Myeloid differentiation primary response protein MyD88.